Here is a 156-residue protein sequence, read N- to C-terminus: Calcium-binding protein A (156 aa).

EF-hand domains follow at residues 4 to 39, 40 to 75, 80 to 115, and 118 to 153; these read AITK…TGSK, DPLR…VAAK, AINN…NNPD, and APLM…YKSL. Ca(2+) contacts are provided by Asp17, Asn19, Asp21, Asn23, Glu28, Asp53, Asp55, Asp57, Glu64, Asp93, Asp95, Asp97, Arg99, Glu104, Asp131, Asp133, Asp135, and Glu142.

The sequence is that of Calcium-binding protein A (cbpA) from Dictyostelium discoideum (Social amoeba).